Here is a 97-residue protein sequence, read N- to C-terminus: MAKSFPVFSLLSFILIHLVLSSVSGPRHWWPPRGIIKVKCPYEKVNLSWYNGTVNPCPGLYQPICGTNFITYDNPCILCVESLKSHGRIRFYHDGKC.

The signal sequence occupies residues methionine 1–serine 21. The Kazal-like domain maps to glycine 34–cysteine 97. 3 cysteine pairs are disulfide-bonded: cysteine 40-cysteine 79, cysteine 57-cysteine 76, and cysteine 65-cysteine 97. Asparagine 51 carries an N-linked (GlcNAc...) asparagine glycan.

The protein localises to the secreted. Functionally, may be a serine protease inhibitor. The polypeptide is Serine protease inhibitor Kazal-type 14 (SPINK14) (Homo sapiens (Human)).